The sequence spans 565 residues: Protein unc-87 (565 aa).

A compositionally biased stretch (low complexity) spans 1–27 (MLSFNNTTSASSFQSASSRYLMSSSSS). 2 disordered regions span residues 1–83 (MLSF…TTNS) and 237–262 (IPSQAGWNKGDSQKLMTNFGTPRNTN). Residues 54 to 69 (EALERLRPNTASRERN) show a composition bias toward basic and acidic residues. 3 Calponin-like repeats span residues 237–262 (IPSQAGWNKGDSQKLMTNFGTPRNTN), 285–310 (VRLQSGTNKYCSQRGMTGFGSGRDVC), and 338–363 (VRLQAGTNKYDSQKGMTGFGTGRRET). A compositionally biased stretch (polar residues) spans 250–262 (KLMTNFGTPRNTN). Residues 369 to 381 (SKHPEYDHEKPDQ) are compositionally biased toward basic and acidic residues. The disordered stretch occupies residues 369 to 400 (SKHPEYDHEKPDQSEIPLQSGTNKFASQKGMT). Residues 384-398 (IPLQSGTNKFASQKG) are compositionally biased toward polar residues. 4 Calponin-like repeats span residues 384–409 (IPLQSGTNKFASQKGMTGFGTARRET), 431–456 (IPSQMGSNQYASQKGMTGFGQPRWEV), 472–497 (VRLQSGTNRFASQAGMIGFGTCRNTT), and 517–542 (IPSQAGWNKGDSQKKMTSFGAPRDVK).

It belongs to the calponin family. In terms of assembly, monomer. Interacts with F-actin. Interacts with myosin. As to expression, expressed in the body wall muscles. Isoform a: Expression in the pharynx, anal depressor muscle, uterine muscle, vulva and unidentified neurons in the head and the ventral region. Isoform b: Expression in the body wall muscles, spermatheca, vulva and in the myoepithelial sheath.

The protein resides in the cytoplasm. It is found in the myofibril. The protein localises to the sarcomere. It localises to the i band. Functionally, thin filament-associated protein that is implicated in actin bundling and actin filament dynamics. Exhibits F-actin cross-linking activity. Required for the maintenance of sarcomeric actin organization in striated muscles. Competes with unc-60 isoform b for actin binding and protects actin filaments from depolymerization by unc-60, thereby contributing to actin filament stability. Cooperates with myosin to form actomyosin bundles and inhibits actomyosin ATPase activity and actomyosin motility. Might protect the myofilaments from mechanical stress. Acts as a negative regulator of myosin-dependent contractility of smooth muscle-like cells in the somatic gonad. The polypeptide is Protein unc-87 (unc-87) (Caenorhabditis elegans).